A 184-amino-acid chain; its full sequence is ATP synthase subunit b, chloroplastic (184 aa).

A helical membrane pass occupies residues 27 to 49; the sequence is LATNLINLSVVLGVLIFFGKGVL.

This sequence belongs to the ATPase B chain family. As to quaternary structure, F-type ATPases have 2 components, F(1) - the catalytic core - and F(0) - the membrane proton channel. F(1) has five subunits: alpha(3), beta(3), gamma(1), delta(1), epsilon(1). F(0) has four main subunits: a(1), b(1), b'(1) and c(10-14). The alpha and beta chains form an alternating ring which encloses part of the gamma chain. F(1) is attached to F(0) by a central stalk formed by the gamma and epsilon chains, while a peripheral stalk is formed by the delta, b and b' chains.

It is found in the plastid. The protein localises to the chloroplast thylakoid membrane. Its function is as follows. F(1)F(0) ATP synthase produces ATP from ADP in the presence of a proton or sodium gradient. F-type ATPases consist of two structural domains, F(1) containing the extramembraneous catalytic core and F(0) containing the membrane proton channel, linked together by a central stalk and a peripheral stalk. During catalysis, ATP synthesis in the catalytic domain of F(1) is coupled via a rotary mechanism of the central stalk subunits to proton translocation. Component of the F(0) channel, it forms part of the peripheral stalk, linking F(1) to F(0). The chain is ATP synthase subunit b, chloroplastic from Nicotiana tabacum (Common tobacco).